Reading from the N-terminus, the 488-residue chain is Putative BTB/POZ domain-containing protein L674 (488 aa).

Residues 83 to 150 (NIVYFNIGGK…VKNQKCPINN (68 aa)) form the BTB domain.

Belongs to the mimivirus BTB/WD family.

This Acanthamoeba polyphaga (Amoeba) protein is Putative BTB/POZ domain-containing protein L674.